Reading from the N-terminus, the 876-residue chain is E3 ubiquitin-protein ligase TRIM71 (876 aa).

An RING-type zinc finger spans residues 12–90 (CPLCKEMCGS…ALKLRCPICD (79 aa)). A compositionally biased stretch (low complexity) spans 26 to 40 (SSNSSTSSSSSQTSG). 2 disordered regions span residues 26–46 (SSNS…GGGG) and 128–192 (KNGR…AALL). Residues 137–148 (PAAGSGAGGGGA) show a composition bias toward gly residues. Over residues 160–182 (RAAAAASSPAAGSAAPSASSSSS) the composition is skewed to low complexity. The B box-type 1; atypical zinc finger occupies 200-247 (QGEPRCSSCDEGNAASSRCLDCQEHLCDNCVRAHQRVRLTKDHFIERF). The Zn(2+) site is built by cysteine 205, cysteine 208, cysteine 229, histidine 233, cysteine 286, histidine 289, cysteine 309, and histidine 314. The B box-type 2 zinc finger occupies 281–322 (ERASYCQHHDDEVLHFYCDTCSVPICRECTMGRHVGHSFIYL). 2 coiled-coil regions span residues 344–373 (RQAI…SEVK) and 399–434 (QVKA…EEGR). A Filamin repeat occupies 487–588 (SSGAFAPLTK…IENSPFKVVV (102 aa)). 6 NHL repeats span residues 601 to 644 (GLSF…FKPC), 648 to 691 (HHKF…FTFE), 695 to 738 (ILKF…FGPD), 742 to 785 (LNKY…IHAD), 789 to 832 (ARFL…FESN), and 836 to 876 (LCKF…ILVF).

The protein belongs to the TRIM/RBCC family.

It localises to the cytoplasm. It is found in the P-body. It catalyses the reaction S-ubiquitinyl-[E2 ubiquitin-conjugating enzyme]-L-cysteine + [acceptor protein]-L-lysine = [E2 ubiquitin-conjugating enzyme]-L-cysteine + N(6)-ubiquitinyl-[acceptor protein]-L-lysine.. It participates in protein modification; protein ubiquitination. Its function is as follows. E3 ubiquitin-protein ligase that cooperates with the microRNAs (miRNAs) machinery and promotes embryonic stem cells proliferation and maintenance. Binds to miRNAs and participates in post-transcriptional repression of transcripts. Required to maintain proliferation and prevent premature differentiation of neural progenitor cells during early neural development. In Gallus gallus (Chicken), this protein is E3 ubiquitin-protein ligase TRIM71 (TRIM71).